A 198-amino-acid polypeptide reads, in one-letter code: Small ribosomal subunit protein eS1 (198 aa).

This sequence belongs to the eukaryotic ribosomal protein eS1 family.

The polypeptide is Small ribosomal subunit protein eS1 (Methanospirillum hungatei JF-1 (strain ATCC 27890 / DSM 864 / NBRC 100397 / JF-1)).